The following is a 464-amino-acid chain: tRNA modification GTPase MnmE (464 aa).

Positions 26, 92, and 131 each coordinate (6S)-5-formyl-5,6,7,8-tetrahydrofolate. The region spanning 227–385 (GIKVAILGRV…LISALKDYVS (159 aa)) is the TrmE-type G domain. Asn-237 is a K(+) binding site. GTP contacts are provided by residues 237-242 (NAGKSS), 256-262 (SNIAGTT), and 281-284 (DTAG). Residue Ser-241 coordinates Mg(2+). Positions 256, 258, and 261 each coordinate K(+). Thr-262 contacts Mg(2+). Lys-464 is a binding site for (6S)-5-formyl-5,6,7,8-tetrahydrofolate.

Belongs to the TRAFAC class TrmE-Era-EngA-EngB-Septin-like GTPase superfamily. TrmE GTPase family. As to quaternary structure, homodimer. Heterotetramer of two MnmE and two MnmG subunits. The cofactor is K(+).

The protein localises to the cytoplasm. In terms of biological role, exhibits a very high intrinsic GTPase hydrolysis rate. Involved in the addition of a carboxymethylaminomethyl (cmnm) group at the wobble position (U34) of certain tRNAs, forming tRNA-cmnm(5)s(2)U34. The protein is tRNA modification GTPase MnmE of Brachyspira hyodysenteriae (strain ATCC 49526 / WA1).